The sequence spans 141 residues: Large ribosomal subunit protein uL16 (141 aa).

It belongs to the universal ribosomal protein uL16 family. In terms of assembly, part of the 50S ribosomal subunit.

Binds 23S rRNA and is also seen to make contacts with the A and possibly P site tRNAs. This is Large ribosomal subunit protein uL16 from Sulfurimonas denitrificans (strain ATCC 33889 / DSM 1251) (Thiomicrospira denitrificans (strain ATCC 33889 / DSM 1251)).